A 288-amino-acid polypeptide reads, in one-letter code: Quinate/shikimate dehydrogenase (288 aa).

The substrate site is built by Lys71 and Asp107. NAD(+) contacts are provided by residues Ala132–Ala135, Asn155–Asp158, Lys205, Cys232–Asn235, and Gly255.

This sequence belongs to the shikimate dehydrogenase family. As to quaternary structure, homodimer.

It catalyses the reaction L-quinate + NAD(+) = 3-dehydroquinate + NADH + H(+). The enzyme catalyses L-quinate + NADP(+) = 3-dehydroquinate + NADPH + H(+). It carries out the reaction shikimate + NADP(+) = 3-dehydroshikimate + NADPH + H(+). The catalysed reaction is shikimate + NAD(+) = 3-dehydroshikimate + NADH + H(+). It participates in metabolic intermediate biosynthesis; chorismate biosynthesis; chorismate from D-erythrose 4-phosphate and phosphoenolpyruvate: step 4/7. Its function is as follows. The actual biological function of YdiB remains unclear, nor is it known whether 3-dehydroshikimate or quinate represents the natural substrate. Catalyzes the reversible NAD-dependent reduction of both 3-dehydroshikimate (DHSA) and 3-dehydroquinate to yield shikimate (SA) and quinate, respectively. It can use both NAD or NADP for catalysis, however it has higher catalytic efficiency with NAD. The protein is Quinate/shikimate dehydrogenase of Escherichia coli O157:H7.